Consider the following 449-residue polypeptide: Biotin carboxylase (449 aa).

In terms of domain architecture, Biotin carboxylation spans 1 to 445 (MLDKIVIANR…NIHYLEKKLG (445 aa)). Residues Lys116, Lys159, 165 to 166 (GG), 201 to 204 (EKYL), His209, and His236 contribute to the ATP site. Residues 120 to 317 (IAAMKKAGVP…LIKEQLRIAA (198 aa)) enclose the ATP-grasp domain. A hydrogencarbonate-binding site is contributed by Lys238. Residues Glu276 and Glu288 each coordinate ATP. 3 residues coordinate Mg(2+): Glu276, Glu288, and Asn290. Residues Glu276, Glu288, and Asn290 each contribute to the Mn(2+) site. 3 residues coordinate hydrogencarbonate: Arg292, Val295, and Arg338. The active site involves Arg292. Arg338 serves as a coordination point for biotin.

As to quaternary structure, acetyl-CoA carboxylase is a heterohexamer of biotin carboxyl carrier protein, biotin carboxylase and the two subunits of carboxyl transferase in a 2:2 complex. Requires Mg(2+) as cofactor. Mn(2+) serves as cofactor.

The enzyme catalyses N(6)-biotinyl-L-lysyl-[protein] + hydrogencarbonate + ATP = N(6)-carboxybiotinyl-L-lysyl-[protein] + ADP + phosphate + H(+). It participates in lipid metabolism; malonyl-CoA biosynthesis; malonyl-CoA from acetyl-CoA: step 1/1. This protein is a component of the acetyl coenzyme A carboxylase complex; first, biotin carboxylase catalyzes the carboxylation of the carrier protein and then the transcarboxylase transfers the carboxyl group to form malonyl-CoA. This Escherichia coli O157:H7 protein is Biotin carboxylase (accC).